The following is a 467-amino-acid chain: Probable endopeptidase p60 (467 aa).

Positions 1 to 27 are cleaved as a signal peptide; the sequence is MNMKKATIAATAGIAVTAFAAPTIASA. The LysM 1 domain occupies 28–71; it reads STVVVEAGDTLWGIAQSKGTTVDAIKKANNLTTDKIVPGQKLQV. In terms of domain architecture, SH3b spans 79-143; the sequence is KAEKSVSATW…VNGKYLTDKA (65 aa). Disordered stretches follow at residues 154-199 and 247-348; these read KKET…QNAT and KTVA…GSTN. A compositionally biased stretch (low complexity) spans 172-185; it reads KQPTTQQTAPAPKA. Residues 199 to 242 enclose the LysM 2 domain; that stretch reads TTHNVKSGDTIWALSVKYGVSVQDIMSWNNLSSSSIYVGQKLAI. Over residues 288 to 348 the composition is skewed to low complexity; that stretch reads TEQQTTTKAP…NTNTNQGSTN (61 aa). Positions 330–343 are 7 X 2 AA tandem repeats of T-N; sequence TNTNTNTNTNTNTN. Residues 349–467 form the NlpC/P60 domain; sequence NASASALIAE…GKFLVGFGRV (119 aa). The active-site Nucleophile is the Cys379. The active-site Proton acceptor is His429. Residue Asn441 is part of the active site.

It belongs to the peptidase C40 family.

This major extracellular protein may be involved in the invasion of non-professional phagocytic cells by Listeria. This Listeria innocua serovar 6a (strain ATCC BAA-680 / CLIP 11262) protein is Probable endopeptidase p60 (iap).